Consider the following 206-residue polypeptide: Guanylyl cyclase inhibitory protein (206 aa).

Residue glycine 2 is the site of N-myristoyl glycine attachment. EF-hand domains are found at residues 31–49 (SGLI…VTVG), 51–86 (NSSE…LAHG), 87–122 (TPED…VYKM), and 135–170 (TAEE…DEWV). The Ca(2+) site is built by aspartate 64, asparagine 66, aspartate 68, glutamate 75, aspartate 100, aspartate 102, aspartate 104, and glutamate 111.

As to expression, retina; inner segments, somata and synaptic terminals of cone receptors.

Functionally, does not stimulate guanylyl cyclase (GC) when free calcium ion concentration is low, but inhibits GC when free calcium ions concentration is elevated. This Lithobates pipiens (Northern leopard frog) protein is Guanylyl cyclase inhibitory protein (GCIP).